We begin with the raw amino-acid sequence, 600 residues long: Sodium- and chloride-dependent betaine transporter (600 aa).

The interval 1 to 31 (MGTSEHVPLPTDEAKAKELEQSQHSEEPDRG) is disordered. At 1–38 (MGTSEHVPLPTDEAKAKELEQSQHSEEPDRGQWTGKFD) the chain is on the cytoplasmic side. Residues 12 to 30 (DEAKAKELEQSQHSEEPDR) show a composition bias toward basic and acidic residues. A run of 3 helical transmembrane segments spans residues 39–59 (FLMS…FPYL), 68–88 (FLVV…LMEV), and 116–136 (VVIA…AMFY). The Extracellular segment spans residues 137–207 (MISSIAWVFP…DTGDISEFGG (71 aa)). N165 carries an N-linked (GlcNAc...) asparagine glycan. Helical transmembrane passes span 208–228 (IQWE…FALW) and 237–257 (FVYF…IRGL). Residue N273 is glycosylated (N-linked (GlcNAc...) asparagine). 7 helical membrane passes run 286 to 306 (AGTQ…ALGS), 321 to 341 (MCFI…SILG), 378 to 398 (VFAV…QVCM), 420 to 440 (SLGI…THSG), 454 to 474 (GYAL…GFGA), 499 to 519 (FCAP…YHPV), and 536 to 556 (WFLS…YLFF). Residues 557-600 (TNKHLTLKERVRKGLNLDGSFESPAKKNLVNNAEELKFIESSSQ) lie on the Cytoplasmic side of the membrane.

This sequence belongs to the sodium:neurotransmitter symporter (SNF) family. Highly expressed in the head, the excretory canal, tail hypodermal cells, epidermis and vulval epithelial cells. Expressed in the excretory canal-associated neuron and in some non-amphidial sensory neurons in the head (at protein level).

The protein localises to the cell membrane. Functionally, betaine transporter dependent on Na(+) and Cl(-) ions that functions primarily in the epidermis to clear betaine from the extracellular space. Elicits current in response to betaine but not in response to GABA, L-carnitine, sarcosine, glycine or dimethylglycine. The protein is Sodium- and chloride-dependent betaine transporter of Caenorhabditis elegans.